The following is a 288-amino-acid chain: ATP synthase gamma chain (288 aa).

Belongs to the ATPase gamma chain family. As to quaternary structure, F-type ATPases have 2 components, CF(1) - the catalytic core - and CF(0) - the membrane proton channel. CF(1) has five subunits: alpha(3), beta(3), gamma(1), delta(1), epsilon(1). CF(0) has three main subunits: a, b and c.

It localises to the cell inner membrane. Its function is as follows. Produces ATP from ADP in the presence of a proton gradient across the membrane. The gamma chain is believed to be important in regulating ATPase activity and the flow of protons through the CF(0) complex. This Polaromonas naphthalenivorans (strain CJ2) protein is ATP synthase gamma chain.